The primary structure comprises 360 residues: Phenylalanine--tRNA ligase alpha subunit (360 aa).

Glutamate 260 serves as a coordination point for Mg(2+).

The protein belongs to the class-II aminoacyl-tRNA synthetase family. Phe-tRNA synthetase alpha subunit type 1 subfamily. In terms of assembly, tetramer of two alpha and two beta subunits. Mg(2+) is required as a cofactor.

Its subcellular location is the cytoplasm. It catalyses the reaction tRNA(Phe) + L-phenylalanine + ATP = L-phenylalanyl-tRNA(Phe) + AMP + diphosphate + H(+). This chain is Phenylalanine--tRNA ligase alpha subunit, found in Rhizobium etli (strain ATCC 51251 / DSM 11541 / JCM 21823 / NBRC 15573 / CFN 42).